Here is a 243-residue protein sequence, read N- to C-terminus: Ion-translocating oxidoreductase complex subunit E (243 aa).

6 helical membrane-spanning segments follow: residues 40 to 60 (LGMGLATTVVLILSNVVISAL), 72 to 92 (AFILIIAAIVTVVDLALNAWL), 94 to 114 (DLHKVLGLFIALIVTNCAILG), 129 to 149 (ALDGLMMGIGFTLALVVVGAI), 152 to 172 (ILGSGTLFAQASLLLGPHFAF), and 183 to 203 (GFLIMILPPGGFLVVGGLFAL).

Belongs to the NqrDE/RnfAE family. In terms of assembly, the complex is composed of six subunits: RnfA, RnfB, RnfC, RnfD, RnfE and RnfG.

It localises to the cellular chromatophore membrane. In terms of biological role, part of a membrane-bound complex that couples electron transfer with translocation of ions across the membrane. Required for nitrogen fixation. Involved in electron transfer to nitrogenase. The polypeptide is Ion-translocating oxidoreductase complex subunit E (Rhodobacter capsulatus (Rhodopseudomonas capsulata)).